Here is a 476-residue protein sequence, read N- to C-terminus: Protein transport protein Sec61 subunit alpha (476 aa).

At 2–33 the chain is on the cytoplasmic side; the sequence is GIKFLEFIKPFCAVLPEIQKPERKIQFREKVL. Residues 34 to 53 traverse the membrane as a helical segment; that stretch reads WTAITLFIFLVCCQIPLFGI. The Lumenal segment spans residues 54–76; the sequence is MSSDSADPFYWMRVILASNRGTL. The helical transmembrane segment at 77–96 threads the bilayer; the sequence is MELGISPIVTSGLIMQLLAG. Residues 97–117 lie on the Cytoplasmic side of the membrane; it reads AKIIEVGDTPKDRALFNGAQK. The helical transmembrane segment at 118–138 threads the bilayer; the sequence is LFGMIITIGQAIVYVMTGMYG. The Lumenal segment spans residues 139 to 144; the sequence is DPSEMG. The helical transmembrane segment at 145-165 threads the bilayer; the sequence is AGICLLIIIQLFVAGLIVLLL. Residues 166–172 lie on the Cytoplasmic side of the membrane; it reads DELLQKG. Residues 173–193 traverse the membrane as a helical segment; sequence YGLGSGISLFIATNICETIVW. The Lumenal portion of the chain corresponds to 194–240; sequence KAFSPTTVNTGRGTEFEGAIIALFHLLATRTDKVRALREAFYRQNLP. Residues 241 to 261 form a helical membrane-spanning segment; that stretch reads NILNLIATVFVFAVVIYFQGF. Residues 262 to 288 are Cytoplasmic-facing; that stretch reads RVDLPIKSARYRGQYNTYPIKLFYTSN. The chain crosses the membrane as a helical span at residues 289–309; sequence IPIILQSALVSNLYVISQMLS. Residues 310 to 354 lie on the Lumenal side of the membrane; that stretch reads TRFSGNFLVNLLGTWSDATSGGPARAYPVAGLCYYLSPPESFGSV. The chain crosses the membrane as a helical span at residues 355–375; it reads LDDPVHAAIYIVFMLGSCAFF. At 376-420 the chain is on the cytoplasmic side; that stretch reads SKTWIEVSGSSAKDVAKQLKEQQMVMRGHRETSMVHELNRYIPTA. The helical transmembrane segment at 421–441 threads the bilayer; it reads AAFGGLCIGGLSVMADFLGAI. The Lumenal segment spans residues 442–445; the sequence is GSGT. Residues 446 to 462 form a helical membrane-spanning segment; the sequence is GILLAVTIIYQYFEIFV. At 463-476 the chain is on the cytoplasmic side; that stretch reads KEQSEMGSMGALLF.

Belongs to the SecY/SEC61-alpha family. The SEC61 channel-forming translocon complex consists of channel-forming core components SEC61A1, SEC61B and SEC61G and different auxiliary components such as SEC62 and SEC63. The SEC61 channel associates with the multi-pass translocon (MPT) complex.

The protein resides in the endoplasmic reticulum membrane. Functionally, component of SEC61 channel-forming translocon complex that mediates transport of signal peptide-containing precursor polypeptides across the endoplasmic reticulum (ER). Forms a ribosome receptor and a gated pore in the ER membrane, both functions required for cotranslational translocation of nascent polypeptides. May cooperate with auxiliary protein SEC62, SEC63 and HSPA5/BiP to enable post-translational transport of small presecretory proteins. The SEC61 channel is also involved in ER membrane insertion of transmembrane proteins: it mediates membrane insertion of the first few transmembrane segments of proteins, while insertion of subsequent transmembrane regions of multi-pass membrane proteins is mediated by the multi-pass translocon (MPT) complex. The protein is Protein transport protein Sec61 subunit alpha (sec61a) of Notothenia angustata (Rockcod).